An 8545-amino-acid chain; its full sequence is Nuclear anchorage protein 1 (8545 aa).

The actin-binding stretch occupies residues 1-325 (MSSSPPARPC…VITYVSQFVR (325 aa)). Over 1-8494 (MSSSPPARPC…QRSRWRRVLR (8494 aa)) the chain is Cytoplasmic. The Calponin-homology (CH) 1 domain occupies 23–130 (KAQKNTFTRW…LIWQIILHFQ (108 aa)). Residues 148 to 197 (TEEPTSSAQPEVVVTAPSPTPSSKKSHSKVSSLSGSKTSLASGEKAPSSP) are disordered. Residues 159–190 (VVVTAPSPTPSSKKSHSKVSSLSGSKTSLASG) show a composition bias toward low complexity. Positions 222-328 (QSVEQVFLRW…YVSQFVRMFG (107 aa)) constitute a Calponin-homology (CH) 2 domain. Coiled coils occupy residues 754–774 (NIRDKLIELERLNEIYDNHSR), 1072–1101 (SFFQLEFDRLNEKLNMLIHDKDKLRELMVH), 1215–1236 (ADILRMKDEKKRDEKTIDEIQA), 1324–1384 (DTKK…QFED), 1574–1629 (RSIE…DLVK), 1725–1754 (ENRNDLEEVKRLAAEIDRAIDTASSMYEDA), 1950–1981 (PAIIESLDKIKDQINNARDNINRQIDNLNYNQ), 2103–2580 (DNIE…KKSD), 2682–2712 (SVKETLDKLKQAKEEDDKLAGVYDELEKIAK), 2852–2949 (IMQE…NIGK), 3002–3119 (DQIV…KTVV), 3178–3295 (DDEK…DEFK), 3346–3417 (QLQH…PEND), 3482–3552 (DELI…EKSL), 3587–3703 (KAEE…ELLD), 3781–3839 (ALKA…KEQL), 3902–4022 (AAHD…KTVV), 4114–4198 (LDVA…DEFK), and 4249–4320 (QLQH…PEND). Basic and acidic residues predominate over residues 3010–3019 (EAEDVTAKES). The interval 3010 to 3033 (EAEDVTAKESAKKKKKDKKKSPQE) is disordered. Tandem repeats lie at residues 3241 to 4143 (QVAK…KIDP), 4144 to 5097 (QVAK…KIDP), 5098 to 6000 (QVAK…KIDP), 6001 to 6903 (QVAK…KIDP), 6904 to 7806 (QVAK…KIDP), and 7807 to 8199 (QVAK…EERA). Positions 3241–8199 (QVAKDIKDSK…TLIPDLEERA (4959 aa)) are 6 X tandem repeat. The span at 3913 to 3922 (EAEDVTAKES) shows a compositional bias: basic and acidic residues. The disordered stretch occupies residues 3913–3936 (EAEDVTAKESAKKKKKDKKKSPQE). The span at 4372–4393 (ITREDGGDDNKSPDELIDDRGR) shows a compositional bias: basic and acidic residues. The segment at 4372 to 4395 (ITREDGGDDNKSPDELIDDRGRST) is disordered. Coiled-coil stretches lie at residues 4436-4506 (DELI…EKSL), 4541-4657 (KAEE…ELLD), 4735-4793 (ALKA…KEQL), 4856-4976 (AAHD…KTVV), 5035-5152 (DDEK…DEFK), 5203-5274 (QLQH…PEND), 5339-5409 (DELI…EKSL), 5444-5560 (KAEE…ELLD), 5638-5696 (ALKA…KEQL), 5759-5879 (AAHD…KTVV), 5938-6055 (DDEK…DEFK), 6106-6177 (QLQH…PEND), 6242-6312 (DELI…EKSL), 6347-6463 (KAEE…ELLD), 6541-6599 (ALKA…KEQL), 6662-6782 (AAHD…KTVV), 6841-6958 (DDEK…DEFK), 7009-7080 (QLQH…PEND), 7145-7215 (DELI…EKSL), 7250-7366 (KAEE…ELLD), 7444-7502 (ALKA…KEQL), 7565-7685 (AAHD…KTVV), 7744-7861 (DDEK…DEFK), 7912-7983 (QLQH…PEND), 8048-8118 (DELI…EKSL), 8153-8204 (KAEE…IWER), 8273-8329 (VAED…DINN), and 8370-8390 (STSIDLDQLLAEAKRLLKEIE). Basic and acidic residues predominate over residues 4867–4876 (EAEDVTAKES). The disordered stretch occupies residues 4867–4890 (EAEDVTAKESAKKKKKDKKKSPQE). The span at 5770–5779 (EAEDVTAKES) shows a compositional bias: basic and acidic residues. The disordered stretch occupies residues 5770 to 5793 (EAEDVTAKESAKKKKKDKKKSPQE). The span at 6673–6682 (EAEDVTAKES) shows a compositional bias: basic and acidic residues. The disordered stretch occupies residues 6673–6696 (EAEDVTAKESAKKKKKDKKKSPQE). Residues 7576-7585 (EAEDVTAKES) are compositionally biased toward basic and acidic residues. Positions 7576–7599 (EAEDVTAKESAKKKKKDKKKSPQE) are disordered. Disordered stretches follow at residues 8391–8418 (PRLQLAQPDHDNEDDEDEEKGSDEKPYD) and 8449–8480 (SDSESRSEFDSLDSRSDGLLSPIPDDSTLSEE). Residues 8401–8411 (DNEDDEDEEKG) show a composition bias toward acidic residues. A compositionally biased stretch (basic and acidic residues) spans 8451-8464 (SESRSEFDSLDSRS). Residues 8486–8545 (RSRWRRVLRTALPLQALLVLLMGAACLVPHCDDEYCCQLLNNFAKSFDPSLEFVNGPPPF) enclose the KASH domain. A helical; Anchor for type IV membrane protein membrane pass occupies residues 8495–8513 (TALPLQALLVLLMGAACLV). The Perinuclear space segment spans residues 8514-8545 (PHCDDEYCCQLLNNFAKSFDPSLEFVNGPPPF).

Belongs to the nesprin family. Interacts with F-actin via its N-terminal domain. Most likely interacts with unc-84; the interaction is probably required to recruit anc-1 to the nuclear envelope. In terms of tissue distribution, ubiquitously expressed in all postembryonic cells.

It localises to the nucleus outer membrane. The protein resides in the cytoplasm. The protein localises to the cytoskeleton. In terms of biological role, plays a central role in nuclear and mitochondrial anchoring. Probably connects nuclei to the cytoskeleton by interacting with unc-84 at the nuclear envelope and with F-actin in the cytoplasm, creating a bridge across the nuclear envelope between the cytoskeleton and the nucleus. Has a role in positioning of the cell body of the PVQ lumbar interneuron. This Caenorhabditis elegans protein is Nuclear anchorage protein 1.